The primary structure comprises 268 residues: MPSFHNTITIGHRPNGDSKRTTYLVTGASRGIGKGLVASFLARPDSTVIACVRNVASQSKALSDLPCAEGSSLIVVKLDCAVETDPASAVEELQSAHNIRHIDVVVANAAIAGAYGPTSTLPLDAVKEHMQINCYSVLLLFQATRPLLEQAAPGKAKFVFIGAPISTITQMEECARAPLGAYGLTKLAANYLVRKFHFENKWLMSFVIDPGHVQTDMGDSGARLMGRKEAPTTLQQSVDGICARIDEATKEESSGQFLLHEDGSRLPW.

Positions 32, 79, 108, 182, 186, 213, and 215 each coordinate NADP(+). The Proton donor role is filled by tyrosine 182. Catalysis depends on lysine 186, which acts as the Lowers pKa of active site Tyr.

This sequence belongs to the short-chain dehydrogenases/reductases (SDR) family.

It is found in the cytoplasm. The protein resides in the cytosol. The protein localises to the vacuole. It carries out the reaction (1'S)-averantin + NADP(+) = norsolorinic acid + NADPH + H(+). The protein operates within mycotoxin biosynthesis. Functionally, norsolorinic acid ketoreductase; part of the fragmented gene cluster that mediates the biosynthesis of dothistromin (DOTH), a polyketide toxin very similar in structure to the aflatoxin precursor, versicolorin B. The first step of the pathway is the conversion of acetate to norsolorinic acid (NOR) and requires the fatty acid synthase subunits hexA and hexB, as well as the polyketide synthase pksA. PksA combines a hexanoyl starter unit and 7 malonyl-CoA extender units to synthesize the precursor NOR. The hexanoyl starter unit is provided to the acyl-carrier protein (ACP) domain by the fungal fatty acid synthase hexA/hexB. The second step is the conversion of NOR to averantin (AVN) and requires the norsolorinic acid ketoreductase nor1, which catalyzes the dehydration of norsolorinic acid to form (1'S)-averantin. The cytochrome P450 monooxygenase avnA then catalyzes the hydroxylation of AVN to 5'hydroxyaverantin (HAVN). The next step is performed by adhA that transforms HAVN to averufin (AVF). Averufin might then be converted to hydroxyversicolorone by cypX and avfA. Hydroxyversicolorone is further converted versiconal hemiacetal acetate (VHA) by moxY. VHA is then the substrate for the versiconal hemiacetal acetate esterase est1 to yield versiconal (VAL). Versicolorin B synthase vbsA then converts VAL to versicolorin B (VERB) by closing the bisfuran ring. Then, the activity of the versicolorin B desaturase verB leads to versicolorin A (VERA). DotB, a predicted chloroperoxidase, may perform epoxidation of the A-ring of VERA. Alternatively, a cytochrome P450, such as cypX or avnA could catalyze this step. It is also possible that another, uncharacterized, cytochrome P450 enzyme is responsible for this step. Opening of the epoxide could potentially be achieved by the epoxide hydrolase epoA. However, epoA seems not to be required for DOTH biosynthesis, but other epoxide hydrolases may have the ability to complement this hydrolysis. Alternatively, opening of the epoxide ring could be achieved non-enzymatically. The next step is the deoxygenation of ring A to yield the 5,8-dihydroxyanthraquinone which is most likely catalyzed by the NADPH dehydrogenase encoded by ver1. The last stages of DOTH biosynthesis are proposed to involve hydroxylation of the bisfuran. OrdB and norB might have oxidative roles here. An alternative possibility is that cytochrome P450 monoogenases such as avnA and cypX might perform these steps in addition to previously proposed steps. The protein is Norsolorinic acid ketoreductase nor1 of Dothistroma septosporum (strain NZE10 / CBS 128990) (Red band needle blight fungus).